We begin with the raw amino-acid sequence, 417 residues long: Serine hydroxymethyltransferase (417 aa).

Residues L121 and 125-127 contribute to the (6S)-5,6,7,8-tetrahydrofolate site; that span reads GHL. The residue at position 229 (K229) is an N6-(pyridoxal phosphate)lysine. 355–357 is a binding site for (6S)-5,6,7,8-tetrahydrofolate; that stretch reads SPF.

Belongs to the SHMT family. Homodimer. Pyridoxal 5'-phosphate is required as a cofactor.

It is found in the cytoplasm. The enzyme catalyses (6R)-5,10-methylene-5,6,7,8-tetrahydrofolate + glycine + H2O = (6S)-5,6,7,8-tetrahydrofolate + L-serine. It participates in one-carbon metabolism; tetrahydrofolate interconversion. The protein operates within amino-acid biosynthesis; glycine biosynthesis; glycine from L-serine: step 1/1. Catalyzes the reversible interconversion of serine and glycine with tetrahydrofolate (THF) serving as the one-carbon carrier. This reaction serves as the major source of one-carbon groups required for the biosynthesis of purines, thymidylate, methionine, and other important biomolecules. Also exhibits THF-independent aldolase activity toward beta-hydroxyamino acids, producing glycine and aldehydes, via a retro-aldol mechanism. The sequence is that of Serine hydroxymethyltransferase from Buchnera aphidicola subsp. Acyrthosiphon pisum (strain APS) (Acyrthosiphon pisum symbiotic bacterium).